The primary structure comprises 268 residues: Kynurenine formamidase (268 aa).

Residues 33 to 37 carry the HGGXW motif; sequence HGGGW. Ser107 acts as the Nucleophile in catalysis. Catalysis depends on residues Asp219 and His251.

It belongs to the kynurenine formamidase family. In terms of assembly, homodimer.

It catalyses the reaction N-formyl-L-kynurenine + H2O = L-kynurenine + formate + H(+). It participates in amino-acid degradation; L-tryptophan degradation via kynurenine pathway; L-kynurenine from L-tryptophan: step 2/2. Catalyzes the hydrolysis of N-formyl-L-kynurenine to L-kynurenine, the second step in the kynurenine pathway of tryptophan degradation. Kynurenine may be further oxidized to nicotinic acid, NAD(H) and NADP(H). Required for elimination of toxic metabolites. This is Kynurenine formamidase from Scheffersomyces stipitis (strain ATCC 58785 / CBS 6054 / NBRC 10063 / NRRL Y-11545) (Yeast).